Reading from the N-terminus, the 180-residue chain is Guanosine-3',5'-bis(diphosphate) 3'-pyrophosphohydrolase MESH1 (180 aa).

The HD domain maps to tyrosine 33–leucine 128. Mn(2+)-binding residues include histidine 36, histidine 62, and aspartate 63. Residues glutamate 66 and aspartate 67 each act as nucleophile in the active site. A Mn(2+)-binding site is contributed by aspartate 123.

It belongs to the MESH1 family. It depends on Mn(2+) as a cofactor.

It catalyses the reaction guanosine 3',5'-bis(diphosphate) + H2O = GDP + diphosphate + H(+). PpGpp hydrolyzing enzyme involved in starvation response. The sequence is that of Guanosine-3',5'-bis(diphosphate) 3'-pyrophosphohydrolase MESH1 (hddc3) from Danio rerio (Zebrafish).